A 297-amino-acid polypeptide reads, in one-letter code: MECPDPQPILELLEAPCPTIGQPRPEVGLRAGAGRVDIARVDGASAIVACVASSPLQLLAPSPRGRCAWIISASHGGGLLAGDEVSLEVDVGAGAVALLSTQAGTKIYRSRGEVASQGLSARVGAGALLAALPHPVSCFSGARFRQEQRFELARGASLLWLDALVAGRIARGERWAFDEYRSRIEVAIDGRTVLADALRLVPGEGPPIVARLPGVELLATVVALGPAVASAARELLERVAASPAERDAGVLAAASPLRDGLLLRVASRSVEAGLAFLRQRLAFVEAVTGADPFARTP.

Belongs to the UreD family. In terms of assembly, ureD, UreF and UreG form a complex that acts as a GTP-hydrolysis-dependent molecular chaperone, activating the urease apoprotein by helping to assemble the nickel containing metallocenter of UreC. The UreE protein probably delivers the nickel.

The protein localises to the cytoplasm. Required for maturation of urease via the functional incorporation of the urease nickel metallocenter. This Anaeromyxobacter sp. (strain Fw109-5) protein is Urease accessory protein UreD.